The primary structure comprises 187 residues: Adenine phosphoribosyltransferase (187 aa).

Belongs to the purine/pyrimidine phosphoribosyltransferase family. As to quaternary structure, homodimer.

The protein localises to the cytoplasm. The enzyme catalyses AMP + diphosphate = 5-phospho-alpha-D-ribose 1-diphosphate + adenine. The protein operates within purine metabolism; AMP biosynthesis via salvage pathway; AMP from adenine: step 1/1. Its function is as follows. Catalyzes a salvage reaction resulting in the formation of AMP, that is energically less costly than de novo synthesis. This chain is Adenine phosphoribosyltransferase, found in Yersinia pestis (strain Pestoides F).